A 448-amino-acid chain; its full sequence is Exodeoxyribonuclease 7 large subunit (448 aa).

Belongs to the XseA family. As to quaternary structure, heterooligomer composed of large and small subunits.

It is found in the cytoplasm. It catalyses the reaction Exonucleolytic cleavage in either 5'- to 3'- or 3'- to 5'-direction to yield nucleoside 5'-phosphates.. Bidirectionally degrades single-stranded DNA into large acid-insoluble oligonucleotides, which are then degraded further into small acid-soluble oligonucleotides. The sequence is that of Exodeoxyribonuclease 7 large subunit from Geobacillus kaustophilus (strain HTA426).